The sequence spans 220 residues: MSLPLPSHMKSVFLGMKVEISTSVPVTRIGFWRKSVDCKESRIGKQPITVPANVAIAMEGQDLKVKGPLGELSITYPREVLVEKQESGFLRVRKAVETRRANQMHGLFRTLTDNMVVGVSKGFEKKLQLVGVGYRATVEGKDLILSLGFSHPVRMAIPDELQVKVEENTKVTVSGRDKSVVGQFAATIRSWRPPEPYKGKGVRYVDEVVRRKEGKAGKKK.

The transit peptide at M1 to C38 directs the protein to the chloroplast.

As to quaternary structure, component of the chloroplast large ribosomal subunit (LSU). Mature 70S chloroplast ribosomes of higher plants consist of a small (30S) and a large (50S) subunit. The 30S small subunit contains 1 molecule of ribosomal RNA (16S rRNA) and 24 different proteins. The 50S large subunit contains 3 rRNA molecules (23S, 5S and 4.5S rRNA) and 33 different proteins.

Its subcellular location is the plastid. The protein resides in the chloroplast. Its function is as follows. Component of the chloroplast ribosome (chloro-ribosome), a dedicated translation machinery responsible for the synthesis of chloroplast genome-encoded proteins, including proteins of the transcription and translation machinery and components of the photosynthetic apparatus. The protein is Large ribosomal subunit protein uL6c (RPL6) of Spinacia oleracea (Spinach).